A 334-amino-acid chain; its full sequence is S-adenosylmethionine:tRNA ribosyltransferase-isomerase (334 aa).

It belongs to the QueA family. In terms of assembly, monomer.

The protein resides in the cytoplasm. It catalyses the reaction 7-aminomethyl-7-carbaguanosine(34) in tRNA + S-adenosyl-L-methionine = epoxyqueuosine(34) in tRNA + adenine + L-methionine + 2 H(+). The protein operates within tRNA modification; tRNA-queuosine biosynthesis. Transfers and isomerizes the ribose moiety from AdoMet to the 7-aminomethyl group of 7-deazaguanine (preQ1-tRNA) to give epoxyqueuosine (oQ-tRNA). In Thermosipho melanesiensis (strain DSM 12029 / CIP 104789 / BI429), this protein is S-adenosylmethionine:tRNA ribosyltransferase-isomerase.